A 164-amino-acid chain; its full sequence is Histone H3-like centromeric protein CENH3 (164 aa).

Residues 1 to 11 (MARTKHPAVRK) show a composition bias toward basic residues. The segment at 1-71 (MARTKHPAVR…QRKPHRFRPG (71 aa)) is disordered. Lysine 5 bears the N6,N6,N6-trimethyllysine; alternate mark. Lysine 5 is subject to N6,N6-dimethyllysine; alternate. 3 positions are modified to N6-methyllysine; alternate: lysine 5, lysine 19, and lysine 30. Residues 12-26 (SKAEPKKKLQFERSP) show a composition bias toward basic and acidic residues. An N6-acetyllysine; alternate modification is found at lysine 19. Lysine 30 is subject to N6,N6,N6-trimethyllysine; alternate. N6,N6-dimethyllysine; alternate is present on lysine 30. Low complexity predominate over residues 40-55 (TSATTRSAAGTSASGT). Over residues 60–69 (TKQRKPHRFR) the composition is skewed to basic residues.

This sequence belongs to the histone H3 family.

Its subcellular location is the chromosome. The protein resides in the centromere. It is found in the kinetochore. In terms of biological role, histone H3-like variant which exclusively replaces conventional H3 in the nucleosome core of centromeric chromatin at the inner plate of the kinetochore. Required for recruitment and assembly of kinetochore proteins, mitotic progression and chromosome segregation. This is Histone H3-like centromeric protein CENH3 from Oryza sativa subsp. japonica (Rice).